The primary structure comprises 183 residues: Dual-action ribosomal maturation protein DarP (183 aa).

It belongs to the DarP family.

The protein localises to the cytoplasm. Functionally, member of a network of 50S ribosomal subunit biogenesis factors which assembles along the 30S-50S interface, preventing incorrect 23S rRNA structures from forming. Promotes peptidyl transferase center (PTC) maturation. The chain is Dual-action ribosomal maturation protein DarP from Escherichia coli O81 (strain ED1a).